We begin with the raw amino-acid sequence, 218 residues long: Eukaryotic translation initiation factor 4E-1 (218 aa).

The interval 1–39 is disordered; sequence MAEETDTRPASAGSRGRPAPEDDDREEGEITDLACAPSP. Residues 21–30 are compositionally biased toward acidic residues; that stretch reads EDDDREEGEI. EIF4G-binding stretches follow at residues 43 to 46 and 53 to 89; these read HPLE and FDNP…NNIN. Residues 61-66, lysine 93, and 111-112 contribute to the mRNA site; these read KQAAWG and WE. A disulfide bridge connects residues cysteine 116 and cysteine 154. The segment at 137-146 is EIF4G-binding; sequence HTLLAMIGEQ. MRNA is bound by residues 161–166 and 206–210; these read RGKQER and KKMDK.

The protein belongs to the eukaryotic initiation factor 4E family. In terms of assembly, EIF4F is a multi-subunit complex, the composition of which varies with external and internal environmental conditions. It is composed of at least EIF4A, EIF4E and EIF4G. EIF4E is also known to interact with other partners. In higher plants two isoforms of EIF4F have been identified, named isoform EIF4F and isoform EIF(iso)4F. Isoform EIF4F has subunits p220 and p26, whereas isoform EIF(iso)4F has subunits p82 and p28. According to the redox status, the Cys-116-Cys-154 disulfide bridge may have a role in regulating protein function by affecting its ability to bind capped mRNA. Post-translationally, phosphorylated upon oxygen deprivation.

Its subcellular location is the nucleus. The protein localises to the cytoplasm. In terms of biological role, component of the protein complex eIF4F, which is involved in the recognition of the mRNA cap, ATP-dependent unwinding of 5'-terminal secondary structure and recruitment of mRNA to the ribosome. Recognizes and binds the 7-methylguanosine-containing mRNA cap during an early step in the initiation of protein synthesis and facilitates ribosome binding by inducing the unwinding of the mRNAs secondary structures. This chain is Eukaryotic translation initiation factor 4E-1, found in Zea mays (Maize).